The following is a 231-amino-acid chain: Enolase-phosphatase E1 (231 aa).

Positions 206–231 are disordered; sequence LLERPGNAPQPKHSHPKISSFENFNP.

Belongs to the HAD-like hydrolase superfamily. MasA/MtnC family. In terms of assembly, monomer. The cofactor is Mg(2+).

It catalyses the reaction 5-methylsulfanyl-2,3-dioxopentyl phosphate + H2O = 1,2-dihydroxy-5-(methylsulfanyl)pent-1-en-3-one + phosphate. It participates in amino-acid biosynthesis; L-methionine biosynthesis via salvage pathway; L-methionine from S-methyl-5-thio-alpha-D-ribose 1-phosphate: step 3/6. Its pathway is amino-acid biosynthesis; L-methionine biosynthesis via salvage pathway; L-methionine from S-methyl-5-thio-alpha-D-ribose 1-phosphate: step 4/6. Its function is as follows. Bifunctional enzyme that catalyzes the enolization of 2,3-diketo-5-methylthiopentyl-1-phosphate (DK-MTP-1-P) into the intermediate 2-hydroxy-3-keto-5-methylthiopentenyl-1-phosphate (HK-MTPenyl-1-P), which is then dephosphorylated to form the acireductone 1,2-dihydroxy-3-keto-5-methylthiopentene (DHK-MTPene). The sequence is that of Enolase-phosphatase E1 from Leptospira borgpetersenii serovar Hardjo-bovis (strain JB197).